Here is a 133-residue protein sequence, read N- to C-terminus: Small ribosomal subunit protein bS6 (133 aa).

This sequence belongs to the bacterial ribosomal protein bS6 family.

Binds together with bS18 to 16S ribosomal RNA. In Borrelia turicatae (strain 91E135), this protein is Small ribosomal subunit protein bS6.